The following is a 274-amino-acid chain: Large ribosomal subunit protein uL2 (274 aa).

The tract at residues 223–265 is disordered; that stretch reads VVMNPVDHPHGGGEGRTSGGRHPVSPWGMPTKGFKTRKNKRTD. The segment covering 256 to 265 has biased composition (basic residues); it reads FKTRKNKRTD.

Belongs to the universal ribosomal protein uL2 family. Part of the 50S ribosomal subunit. Forms a bridge to the 30S subunit in the 70S ribosome.

Its function is as follows. One of the primary rRNA binding proteins. Required for association of the 30S and 50S subunits to form the 70S ribosome, for tRNA binding and peptide bond formation. It has been suggested to have peptidyltransferase activity; this is somewhat controversial. Makes several contacts with the 16S rRNA in the 70S ribosome. This chain is Large ribosomal subunit protein uL2, found in Vibrio parahaemolyticus serotype O3:K6 (strain RIMD 2210633).